An 89-amino-acid chain; its full sequence is Small ribosomal subunit protein uS15 (89 aa).

Belongs to the universal ribosomal protein uS15 family. As to quaternary structure, part of the 30S ribosomal subunit. Forms a bridge to the 50S subunit in the 70S ribosome, contacting the 23S rRNA.

Functionally, one of the primary rRNA binding proteins, it binds directly to 16S rRNA where it helps nucleate assembly of the platform of the 30S subunit by binding and bridging several RNA helices of the 16S rRNA. Forms an intersubunit bridge (bridge B4) with the 23S rRNA of the 50S subunit in the ribosome. The sequence is that of Small ribosomal subunit protein uS15 from Sinorhizobium medicae (strain WSM419) (Ensifer medicae).